Consider the following 442-residue polypeptide: Probable xylan O-acetyltransferase 8 (442 aa).

Topologically, residues methionine 1–arginine 13 are cytoplasmic. The chain crosses the membrane as a helical; Signal-anchor for type II membrane protein span at residues alanine 14 to threonine 34. Residues glutamate 35–leucine 442 are Lumenal-facing. The N-linked (GlcNAc...) asparagine glycan is linked to asparagine 96. Disulfide bonds link cysteine 100–cysteine 151, cysteine 122–cysteine 187, cysteine 131–cysteine 426, and cysteine 344–cysteine 422. The GDS motif signature appears at glycine 174–serine 176. Serine 176 (nucleophile) is an active-site residue. N-linked (GlcNAc...) asparagine glycosylation is found at asparagine 217, asparagine 346, and asparagine 384. Residue aspartate 421 is the Proton donor of the active site. The short motif at aspartate 421 to histidine 424 is the DXXH motif element. The active-site Proton acceptor is histidine 424.

The protein belongs to the PC-esterase family. TBL subfamily.

The protein localises to the golgi apparatus membrane. Its function is as follows. Probable xylan acetyltransferase required for 2-O- and 3-O-monoacetylation of xylosyl residues in xylan. Possesses extremely low activity in vitro. The polypeptide is Probable xylan O-acetyltransferase 8 (Oryza sativa subsp. japonica (Rice)).